The following is a 535-amino-acid chain: ATP-dependent RNA helicase DBP3 (535 aa).

Residues 1–21 (MSKHELKDKKRKSVDGEDVSK) show a composition bias toward basic and acidic residues. The interval 1 to 82 (MSKHELKDKK…GSETAPVGDS (82 aa)) is disordered. Residues 22–33 (SKKVKKDKKDKK) show a composition bias toward basic residues. Over residues 34–72 (DKKAKDGNDKVKDKKDKNKKDKSKTDKNLKEVQETEAHT) the composition is skewed to basic and acidic residues. A Q motif motif is present at residues 125 to 151 (LSFSHLNLHSAIQKEISKFPKPTPIQA). Residues 154-327 (WPYLLAGKDV…STFMRAPVKV (174 aa)) enclose the Helicase ATP-binding domain. Position 167 to 174 (167 to 174 (AETGSGKT)) interacts with ATP. A DEAD box motif is present at residues 274–277 (DEAD). One can recognise a Helicase C-terminal domain in the interval 352–505 (KKEKRLLELL…PVPEELMKFG (154 aa)).

It belongs to the DEAD box helicase family. DDX5/DBP2 subfamily.

It localises to the nucleus. Its subcellular location is the nucleolus. It catalyses the reaction ATP + H2O = ADP + phosphate + H(+). In terms of biological role, ATP-dependent RNA helicase required for 60S ribosomal subunit synthesis. Involved in efficient pre-rRNA processing, predominantly at site A3, which is necessary for the normal formation of 25S and 5.8S rRNAs. The chain is ATP-dependent RNA helicase DBP3 (DBP3) from Eremothecium gossypii (strain ATCC 10895 / CBS 109.51 / FGSC 9923 / NRRL Y-1056) (Yeast).